A 694-amino-acid polypeptide reads, in one-letter code: Glycine--tRNA ligase beta subunit (694 aa).

The protein belongs to the class-II aminoacyl-tRNA synthetase family. Tetramer of two alpha and two beta subunits.

The protein resides in the cytoplasm. It carries out the reaction tRNA(Gly) + glycine + ATP = glycyl-tRNA(Gly) + AMP + diphosphate. This Lactiplantibacillus plantarum (strain ATCC BAA-793 / NCIMB 8826 / WCFS1) (Lactobacillus plantarum) protein is Glycine--tRNA ligase beta subunit.